The following is a 336-amino-acid chain: 3-isopropylmalate dehydrogenase (336 aa).

Substrate contacts are provided by arginine 87, arginine 97, arginine 121, and aspartate 211. Residues aspartate 211, aspartate 235, and aspartate 239 each coordinate Mg(2+). 271–283 (GSAPDIAGQGIAD) serves as a coordination point for NAD(+).

It belongs to the isocitrate and isopropylmalate dehydrogenases family. LeuB type 2 subfamily. In terms of assembly, homodimer. It depends on Mg(2+) as a cofactor. The cofactor is Mn(2+).

It is found in the cytoplasm. The catalysed reaction is (2R,3S)-3-isopropylmalate + NAD(+) = 4-methyl-2-oxopentanoate + CO2 + NADH. It participates in amino-acid biosynthesis; L-leucine biosynthesis; L-leucine from 3-methyl-2-oxobutanoate: step 3/4. Catalyzes the oxidation of 3-carboxy-2-hydroxy-4-methylpentanoate (3-isopropylmalate) to 3-carboxy-4-methyl-2-oxopentanoate. The product decarboxylates to 4-methyl-2 oxopentanoate. This chain is 3-isopropylmalate dehydrogenase, found in Mycolicibacterium vanbaalenii (strain DSM 7251 / JCM 13017 / BCRC 16820 / KCTC 9966 / NRRL B-24157 / PYR-1) (Mycobacterium vanbaalenii).